Reading from the N-terminus, the 361-residue chain is Probable mannose-1-phosphate guanylyltransferase 2 (361 aa).

Residues Leu-6 and Val-7 each coordinate GDP-alpha-D-mannose. Diphosphate is bound by residues Gly-9, Gly-11, Thr-12, Arg-13, and Lys-23. Gly-85, Asn-109, Asp-111, Gly-146, and Asn-173 together coordinate GDP-alpha-D-mannose.

Belongs to the transferase hexapeptide repeat family.

The enzyme catalyses alpha-D-mannose 1-phosphate + GTP + H(+) = GDP-alpha-D-mannose + diphosphate. It participates in nucleotide-sugar biosynthesis; GDP-alpha-D-mannose biosynthesis; GDP-alpha-D-mannose from alpha-D-mannose 1-phosphate (GTP route): step 1/1. Its function is as follows. Catalyzes a reaction of the Smirnoff-Wheeler pathway, the major route to ascorbate biosynthesis in plants. This chain is Probable mannose-1-phosphate guanylyltransferase 2, found in Oryza sativa subsp. japonica (Rice).